The primary structure comprises 812 residues: Phospholipase D alpha 2 (812 aa).

A propeptide spanning residues 1–36 (MAQHLLHGTLHATIYEVDALHTGGLRSAGFLGKIIS) is cleaved from the precursor. The C2 domain occupies 1 to 127 (MAQHLLHGTL…INGEEVEKWV (127 aa)). The region spanning 328 to 368 (AMFTHHQKIVVVDSEVPSQGGGSEMRRIMSFVGGIDLCDGR) is the PLD phosphodiesterase 1 domain. Residues His-333, Lys-335, and Asp-340 contribute to the active site. His-333 contacts a 1,2-diacyl-sn-glycero-3-phosphate. Ca(2+) is bound at residue His-374. Residues Gln-524 and His-663 each contribute to the a 1,2-diacyl-sn-glycero-3-phosphate site. One can recognise a PLD phosphodiesterase 2 domain in the interval 658-685 (FMIYVHSKMMIVDDEYIIVGSANINQRS). Residues His-663, Lys-665, and Asp-670 contribute to the active site. A Ca(2+)-binding site is contributed by Glu-724.

The protein belongs to the phospholipase D family. C2-PLD subfamily. The cofactor is Ca(2+).

It localises to the cytoplasm. The protein localises to the membrane. The enzyme catalyses a 1,2-diacyl-sn-glycero-3-phosphocholine + H2O = a 1,2-diacyl-sn-glycero-3-phosphate + choline + H(+). Functionally, hydrolyzes glycerol-phospholipids at the terminal phosphodiesteric bond. Plays an important role in various cellular processes, including phytohormone action, vesicular trafficking, secretion, cytoskeletal arrangement, meiosis, tumor promotion, pathogenesis, membrane deterioration and senescence. In Brassica oleracea var. capitata (Cabbage), this protein is Phospholipase D alpha 2 (PLD2).